A 460-amino-acid polypeptide reads, in one-letter code: Bifunctional protein GlmU (460 aa).

Residues 1-235 (MALSAAIVLA…PLTVEGVNDR (235 aa)) are pyrophosphorylase. UDP-N-acetyl-alpha-D-glucosamine-binding positions include 9–12 (LAAG), Lys-23, Gln-76, and 81–82 (GT). Residue Asp-109 coordinates Mg(2+). UDP-N-acetyl-alpha-D-glucosamine is bound by residues Gly-146, Glu-161, Asn-176, and Asn-233. Residue Asn-233 coordinates Mg(2+). The linker stretch occupies residues 236–256 (VQLAALSKTYNRRVCERWMRD). The N-acetyltransferase stretch occupies residues 257-460 (GVTILDPETT…VEGWKPAWER (204 aa)). The UDP-N-acetyl-alpha-D-glucosamine site is built by Arg-338 and Lys-356. Residue His-368 is the Proton acceptor of the active site. Tyr-371 and Asn-382 together coordinate UDP-N-acetyl-alpha-D-glucosamine. Acetyl-CoA-binding positions include 391–392 (NY) and Ala-428.

This sequence in the N-terminal section; belongs to the N-acetylglucosamine-1-phosphate uridyltransferase family. The protein in the C-terminal section; belongs to the transferase hexapeptide repeat family. As to quaternary structure, homotrimer. Mg(2+) is required as a cofactor.

It is found in the cytoplasm. The enzyme catalyses alpha-D-glucosamine 1-phosphate + acetyl-CoA = N-acetyl-alpha-D-glucosamine 1-phosphate + CoA + H(+). It catalyses the reaction N-acetyl-alpha-D-glucosamine 1-phosphate + UTP + H(+) = UDP-N-acetyl-alpha-D-glucosamine + diphosphate. It participates in nucleotide-sugar biosynthesis; UDP-N-acetyl-alpha-D-glucosamine biosynthesis; N-acetyl-alpha-D-glucosamine 1-phosphate from alpha-D-glucosamine 6-phosphate (route II): step 2/2. It functions in the pathway nucleotide-sugar biosynthesis; UDP-N-acetyl-alpha-D-glucosamine biosynthesis; UDP-N-acetyl-alpha-D-glucosamine from N-acetyl-alpha-D-glucosamine 1-phosphate: step 1/1. The protein operates within bacterial outer membrane biogenesis; LPS lipid A biosynthesis. Catalyzes the last two sequential reactions in the de novo biosynthetic pathway for UDP-N-acetylglucosamine (UDP-GlcNAc). The C-terminal domain catalyzes the transfer of acetyl group from acetyl coenzyme A to glucosamine-1-phosphate (GlcN-1-P) to produce N-acetylglucosamine-1-phosphate (GlcNAc-1-P), which is converted into UDP-GlcNAc by the transfer of uridine 5-monophosphate (from uridine 5-triphosphate), a reaction catalyzed by the N-terminal domain. The chain is Bifunctional protein GlmU from Bifidobacterium longum (strain NCC 2705).